A 330-amino-acid chain; its full sequence is MTKIMFFGTRDYEKEMALNWGKKNNVEVTTSKELLSSATVDQLKDYDGVTTMQFGKLENDVYPKLESYGIKQIAQRTAGFDMYDLDLAKKHNIVISNVPSYSPETIAEYSVSIALQLVRRFPDIERRVQTHDFTWQAEIMSKPVKNMTVAIIGTGRIGAATAKIYAGFGATITAYDAYPNKDLDFLTYKDSVKEAIKDADIISLHVPANKESYHLFDKAMFDHVKKGAILVNAARGAVINTPDLIAAVNDGTLLGAAIDTYENEAAYFTNDWTNKDIDDKTLLELIEHERILVTPHIAFFSDEAVQNLVEGGLNAALSVINTGTCETRLN.

NAD(+) is bound by residues R156–I157, D176, V206–P207, A233–R235, and D259. Residue R235 is part of the active site. E264 is an active-site residue. Catalysis depends on H296, which acts as the Proton donor.

The protein belongs to the D-isomer specific 2-hydroxyacid dehydrogenase family.

The enzyme catalyses (R)-lactate + NAD(+) = pyruvate + NADH + H(+). This chain is D-lactate dehydrogenase (ldhD), found in Staphylococcus aureus (strain Mu50 / ATCC 700699).